The sequence spans 558 residues: Arginine--tRNA ligase (558 aa).

Residues 116-126 (ANPNGPLHVGH) carry the 'HIGH' region motif.

This sequence belongs to the class-I aminoacyl-tRNA synthetase family.

The protein resides in the cytoplasm. The catalysed reaction is tRNA(Arg) + L-arginine + ATP = L-arginyl-tRNA(Arg) + AMP + diphosphate. This chain is Arginine--tRNA ligase, found in Methanocorpusculum labreanum (strain ATCC 43576 / DSM 4855 / Z).